The sequence spans 560 residues: Protein NRT1/ PTR FAMILY 2.5 (560 aa).

The disordered stretch occupies residues 1 to 20; sequence MADSKSGDTEVAHRSSDPSE. 12 helical membrane-spanning segments follow: residues 34 to 54, 77 to 97, 101 to 121, 141 to 161, 177 to 197, 207 to 227, 323 to 343, 372 to 392, 404 to 424, 441 to 461, 480 to 500, and 520 to 540; these read TLLGMSITSFGWGMNLIVFLI, MLPVVAAILADSFFGNIPVIS, FISLAGTSLLTLITSLNYLMP, ILYVALALVIIGSAGTRFTLA, FFNWFFLALYIGAITGTTAIV, LGFGLCAVANLISFIVFIAGV, AILRLVPLWAAVMFLSTPVAV, VIVLVFGCVFIMLNNWIIYPM, LQQVGIGHVFTILSMAISAVV, VLWLVPALVMVGIGEAFHFPA, SLTSVVIGISFYLSTAVIDVI, and YWVVVIGGVLNLGYFLVCSWF.

It belongs to the major facilitator superfamily. Proton-dependent oligopeptide transporter (POT/PTR) (TC 2.A.17) family. In terms of tissue distribution, expressed in the root epidermis or cortex.

It is found in the membrane. Transporter involved in a passive nitrate efflux. The chain is Protein NRT1/ PTR FAMILY 2.5 (NPF2.5) from Arabidopsis thaliana (Mouse-ear cress).